A 447-amino-acid chain; its full sequence is MTTILKHLPAGQRIGIAFSGGLDTSAALLWMRQKGAVPYAYTANLGQPDEDDYDAIPRRAMEYGAENARLIDCRKQLVAEGIAAIQCGAFHNTTGGLTYFNTTPLGRAVTGTMLVAAMKEDGVNIWGDGSTYKGNDIERFYRYGLLTNAELQIYKPWLDTDFIDELGGRHEMSEFMIACGFDYKMSVEKAYSTDSNMLGATHEAKDLEFLNSSVKIVNPIMGVKFWDESVKIPAEEVTVRFEQGHPVALNGKTFSDDVEMMLEANRIGGRHGLGMSDQIENRIIEAKSRGIYEAPGMALLHIAYERLLTGIHNEDTIEQYHSHGRQLGKLLYQGRWFDSQALMLRDGLQRWVASQITGEVTLELRRGNDYSILNTVSDNLTYKAERLTMEKGESVFSPDDRIGQLTMRNLDITDTREKLFGYAKAGLLTASSATGLPQVENLENKGK.

ATP is bound by residues 17–25 and alanine 43; that span reads AFSGGLDTS. Residue tyrosine 99 participates in L-citrulline binding. Positions 129 and 131 each coordinate ATP. L-aspartate-binding residues include threonine 131, asparagine 135, and aspartate 136. Residue asparagine 135 participates in L-citrulline binding. Position 136 (aspartate 136) interacts with ATP. Residues arginine 139 and serine 192 each contribute to the L-citrulline site. Aspartate 194 serves as a coordination point for ATP. The L-citrulline site is built by threonine 201, glutamate 203, and glutamate 280.

This sequence belongs to the argininosuccinate synthase family. Type 2 subfamily. As to quaternary structure, homotetramer.

Its subcellular location is the cytoplasm. The catalysed reaction is L-citrulline + L-aspartate + ATP = 2-(N(omega)-L-arginino)succinate + AMP + diphosphate + H(+). The protein operates within amino-acid biosynthesis; L-arginine biosynthesis; L-arginine from L-ornithine and carbamoyl phosphate: step 2/3. The sequence is that of Argininosuccinate synthase from Salmonella agona (strain SL483).